Reading from the N-terminus, the 129-residue chain is Large ribosomal subunit protein bL17 (129 aa).

This sequence belongs to the bacterial ribosomal protein bL17 family. As to quaternary structure, part of the 50S ribosomal subunit. Contacts protein L32.

This is Large ribosomal subunit protein bL17 from Hahella chejuensis (strain KCTC 2396).